Here is a 309-residue protein sequence, read N- to C-terminus: Probable lipid kinase YegS-like (309 aa).

One can recognise a DAGKc domain in the interval 1–134; that stretch reads MTTPRWRLIL…IDLLRVDADG (134 aa). ATP-binding positions include Thr-39, 65–71, and Thr-96; that span reads GDGTLSA. Residues Leu-219, Asp-222, and Leu-224 each coordinate Mg(2+). Glu-280 functions as the Proton acceptor in the catalytic mechanism.

Belongs to the diacylglycerol/lipid kinase family. YegS lipid kinase subfamily. Requires Mg(2+) as cofactor. It depends on Ca(2+) as a cofactor.

It localises to the cytoplasm. Probably phosphorylates lipids; the in vivo substrate is unknown. This is Probable lipid kinase YegS-like from Stenotrophomonas maltophilia (strain K279a).